Reading from the N-terminus, the 268-residue chain is Tryptophan synthase alpha chain (268 aa).

Catalysis depends on proton acceptor residues E49 and D60.

The protein belongs to the TrpA family. Tetramer of two alpha and two beta chains.

It catalyses the reaction (1S,2R)-1-C-(indol-3-yl)glycerol 3-phosphate + L-serine = D-glyceraldehyde 3-phosphate + L-tryptophan + H2O. It participates in amino-acid biosynthesis; L-tryptophan biosynthesis; L-tryptophan from chorismate: step 5/5. Its function is as follows. The alpha subunit is responsible for the aldol cleavage of indoleglycerol phosphate to indole and glyceraldehyde 3-phosphate. The chain is Tryptophan synthase alpha chain from Haemophilus influenzae (strain PittGG).